Consider the following 288-residue polypeptide: MKQVEWDDTLWSRWPTWRLVVEEQPGTIEEKIARDQAMGRRVAAGGPPTFRLWVNDPCLVVSRRDIVQGLRRGGDPPREVDGLPIRVRSSGGTAVPHGPGVLQFSLVVPRMDRVGMEEVYRTLCRPVEAVLGQRGWRAEFGRVAGSFCDGAHNLVVNGRKIAGTSQSWKGGLAVPGSRNRGYILAHGTLWVRVDPEQAADWLNDFYEQTIGERPIRARASTSLHLLPGGEGVDVRQVIAETANVLESAMGPQVKLERVRALTDEEISWGREGASETDPRRVAYGVDRP.

The 210-residue stretch at alanine 44–valine 253 folds into the BPL/LPL catalytic domain. Cysteine 148 (acyl-thioester intermediate) is an active-site residue. Residues glycine 269 to proline 288 form a disordered region. Residues glycine 272–proline 288 show a composition bias toward basic and acidic residues.

It belongs to the octanoyltransferase LipL family.

It carries out the reaction N(6)-octanoyl-L-lysyl-[glycine-cleavage complex H protein] + L-lysyl-[lipoyl-carrier protein] = N(6)-octanoyl-L-lysyl-[lipoyl-carrier protein] + L-lysyl-[glycine-cleavage complex H protein]. It participates in protein modification; protein lipoylation via endogenous pathway; protein N(6)-(lipoyl)lysine from octanoyl-[acyl-carrier-protein]. In terms of biological role, catalyzes the amidotransfer (transamidation) of the octanoyl moiety from octanoyl-GcvH to the lipoyl domain of the E2 subunit of lipoate-dependent enzymes. This Kyrpidia tusciae (strain DSM 2912 / NBRC 15312 / T2) (Bacillus tusciae) protein is Octanoyl-[GcvH]:protein N-octanoyltransferase.